Reading from the N-terminus, the 334-residue chain is MNLYLIFLIVVGVVGLVLVGLFLSFFSVWLRALLAGAPVSPFNLVAMRLRQVPYSVMVDARIRATKAGIKLSIDEIEAQYLAGGNVIACVHALIAAQKARIALDWQRACAIDLATKGSGKSVEEAVRTSVDPKVIDCPNPESGRTTIDGVAKDGIQVKVKARVTVRTNLDRFVGGAKEETIIARVGEGIVSTIGSAESYKVVLESPDAISKTVLHRGLDVGSAFEILSIDIADVDVGENVGAKLQEAQAQANKSIAQAQAEIRRAAAVALEQEMVARVQEMQAKVVEAQSQVPLAMAEAFRSGRLGVMDYFRMENIQGDTAMRNSLARPEDKKQ.

The chain crosses the membrane as a helical span at residues 3–23 (LYLIFLIVVGVVGLVLVGLFL).

It belongs to the flotillin-like FloA family. Homooligomerizes.

The protein localises to the cell membrane. The protein resides in the membrane raft. Functionally, found in functional membrane microdomains (FMM) that may be equivalent to eukaryotic membrane rafts. FMMs are highly dynamic and increase in number as cells age. Flotillins are thought to be important factors in membrane fluidity. This Opitutus terrae (strain DSM 11246 / JCM 15787 / PB90-1) protein is Flotillin-like protein FloA.